The following is a 240-amino-acid chain: MGRIFETRKATMFARWNKMAKAFTRISKDIAIAVKGGGPNPDNNPALRRVLQNARHLNMPKDKVEAAIKRASGQDQQAYEVVVYEGYAPHGVAVMVETATDNVVRTVANVRMHFKNNGGNMGNTGSVAFQFRRMGVFRLAPEGIDQDALELDLIDHGLEEMGESTGEKGEKVLVIRCAFESFGQLQAALEQRKLNVLSSESEYVAQTPVQLPEEQAREVLELVDALEQDEDVQHVFHNLA.

Belongs to the TACO1 family.

Its subcellular location is the cytoplasm. The polypeptide is Probable transcriptional regulatory protein Adeh_2184 (Anaeromyxobacter dehalogenans (strain 2CP-C)).